The chain runs to 610 residues: Elongation factor 4 (610 aa).

The region spanning 14–196 (NRIRNFSIIA…ALVANIPPPK (183 aa)) is the tr-type G domain. GTP is bound by residues 26 to 31 (DHGKST) and 143 to 146 (NKID).

This sequence belongs to the TRAFAC class translation factor GTPase superfamily. Classic translation factor GTPase family. LepA subfamily.

Its subcellular location is the cell inner membrane. The enzyme catalyses GTP + H2O = GDP + phosphate + H(+). Functionally, required for accurate and efficient protein synthesis under certain stress conditions. May act as a fidelity factor of the translation reaction, by catalyzing a one-codon backward translocation of tRNAs on improperly translocated ribosomes. Back-translocation proceeds from a post-translocation (POST) complex to a pre-translocation (PRE) complex, thus giving elongation factor G a second chance to translocate the tRNAs correctly. Binds to ribosomes in a GTP-dependent manner. The polypeptide is Elongation factor 4 (Legionella pneumophila (strain Paris)).